The following is an 804-amino-acid chain: Tegument protein UL47 homolog (804 aa).

The segment covering M1–R15 has biased composition (basic residues). 2 disordered regions span residues M1–P42 and L58–S206. The Nuclear localization signal motif lies at S11–R31. Residues Y32–P42 show a composition bias toward polar residues. Residues M62–D72 are compositionally biased toward acidic residues. The span at S82 to T93 shows a compositional bias: polar residues. Basic and acidic residues predominate over residues S94–N109. Tandem repeats lie at residues D117–E132, D133–E148, and D149–E164. A 6 X 16 AA approximate tandem repeats region spans residues D117–D203. Positions A118–Y204 are enriched in acidic residues. The stretch at D170–E180 is one 1-4; truncated repeat. Residues D181–E191 form a 1-5; truncated repeat. One copy of the 1-6; truncated repeat lies at D192 to D203. Residues Q770–D792 carry the Nuclear export signal motif.

This sequence belongs to the alphaherpesvirinae HHV-1 UL47 family. As to quaternary structure, interacts with US3 kinase. Interacts with ORF24 and ORF27; these interactions seem important for efficient virion nuclear egress. Interacts with ORF17/VHS. In terms of processing, phosphorylated by US3. This phosphorylation is required for proper nuclear localization.

Its subcellular location is the virion tegument. It is found in the host nucleus. The protein resides in the host cytoplasm. In terms of biological role, tegument protein that can bind to various RNA transcripts. Plays a role in the attenuation of selective viral and cellular mRNA degradation by modulating the activity of host shutoff RNase ORF17/VHS. Also plays a role in the primary envelopment of virions in the perinuclear space, probably by interacting with two nuclear egress proteins ORF24 and ORF27. The chain is Tegument protein UL47 homolog from Varicella-zoster virus (strain Oka vaccine) (HHV-3).